The following is a 542-amino-acid chain: Nif-specific regulatory protein (542 aa).

The region spanning 29–170 is the GAF domain; that stretch reads DLSKTLREVL…MVANLIGQTV (142 aa). Residues 203-432 enclose the Sigma-54 factor interaction domain; that stretch reads VIGISKAMQE…LENCVERTAT (230 aa). Residues 231 to 238 and 294 to 303 contribute to the ATP site; these read GESGTGKE and AHGGTLFLDE. The segment at 433 to 499 is inter-domain linker; it reads MMRGDLITEV…ATGAAPPTSE (67 aa). Cys446 and Cys451 together coordinate a divalent metal cation. Residues 500–542 are C-terminal DNA-binding domain; sequence RERLIWAMEQCGWVQAKAARALNISPRQMGYALQKFNIEVKKF. The H-T-H motif DNA-binding region spans 514–533; it reads QAKAARALNISPRQMGYALQ.

As to quaternary structure, interacts with sigma-54.

In terms of biological role, required for activation of most nif operons, which are directly involved in nitrogen fixation. The sequence is that of Nif-specific regulatory protein (nifA) from Herbaspirillum seropedicae.